An 858-amino-acid chain; its full sequence is Ubiquitin carboxyl-terminal hydrolase 5 (858 aa).

Ala2 carries the N-acetylalanine modification. A disordered region spans residues 74–96; that stretch reads RRTRRPKEEDPATGTGDPPRKKP. A Glycyl lysine isopeptide (Lys-Gly) (interchain with G-Cter in SUMO) cross-link involves residue Lys113. 2 positions are modified to phosphoserine: Ser149 and Ser156. The UBP-type; degenerate zinc-finger motif lies at 175–283; sequence QVSKHAFSLK…EHLSHFGIDM (109 aa). An intrachain disulfide couples Cys195 to Cys816. 2 residues coordinate Zn(2+): Cys199 and Cys202. Trp209 provides a ligand contact to substrate. Cys219 is a binding site for Zn(2+). A substrate-binding site is contributed by 221–224; that stretch reads RRYF. Residue His232 participates in Zn(2+) binding. Residues Tyr259, Tyr261, and Asp264 each contribute to the substrate site. At Thr292 the chain carries Phosphothreonine. The USP domain occupies 326–856; it reads TGIRNLGNSC…LGYIYFYQRV (531 aa). Residue Cys335 is the Nucleophile of the active site. At Thr623 the chain carries Phosphothreonine. 2 UBA domains span residues 654 to 695 and 722 to 762; these read MLDE…VMSH and PPPE…IFSH. A phosphoserine mark is found at Ser779, Ser783, and Ser785. The active-site Proton acceptor is the His818.

It belongs to the peptidase C19 family. Homodimer. Interacts with TRIML1. Ubiquitinated by SMURF1; leading to proteasomal degradation. In terms of processing, SUMOylated at Lys-113; SUMOylation affects the interaction with Cav3.2 channels.

It is found in the cytoplasm. The protein resides in the stress granule. Its subcellular location is the nucleus. The enzyme catalyses Thiol-dependent hydrolysis of ester, thioester, amide, peptide and isopeptide bonds formed by the C-terminal Gly of ubiquitin (a 76-residue protein attached to proteins as an intracellular targeting signal).. Deubiquitinating enzyme that participates in a wide range of cellular processes by specifically cleaving isopeptide bonds between ubiquitin and substrate proteins or ubiquitin itself. Affects thereby important cellular signaling pathways such as NF-kappa-B, Wnt/beta-catenin, and cytokine production by regulating ubiquitin-dependent protein degradation. Participates in the activation of the Wnt signaling pathway by promoting FOXM1 deubiquitination and stabilization that induces the recruitment of beta-catenin to Wnt target gene promoter. Regulates the assembly and disassembly of heat-induced stress granules by mediating the hydrolysis of unanchored ubiquitin chains. Promotes lipopolysaccharide-induced apoptosis and inflammatory response by stabilizing the TXNIP protein. Affects T-cell biology by stabilizing the inhibitory receptor on T-cells PDC1. Acts as a negative regulator of autophagy by regulating ULK1 at both protein and mRNA levels. Acts also as a negative regulator of type I interferon production by simultaneously removing both 'Lys-48'-linked unanchored and 'Lys-63'-linked anchored polyubiquitin chains on the transcription factor IRF3. Modulates the stability of DNA mismatch repair protein MLH1 and counteracts the effect of the ubiquitin ligase UBR4. Upon activation by insulin, it gets phosphorylated through mTORC1-mediated phosphorylation to enhance YTHDF1 stability by removing 'Lys-11'-linked polyubiquitination. May also deubiquitinate other substrates such as the calcium channel CACNA1H. This is Ubiquitin carboxyl-terminal hydrolase 5 (USP5) from Homo sapiens (Human).